Reading from the N-terminus, the 469-residue chain is 3-isopropylmalate dehydratase large subunit (469 aa).

[4Fe-4S] cluster is bound by residues cysteine 347, cysteine 407, and cysteine 410.

This sequence belongs to the aconitase/IPM isomerase family. LeuC type 1 subfamily. In terms of assembly, heterodimer of LeuC and LeuD. The cofactor is [4Fe-4S] cluster.

The catalysed reaction is (2R,3S)-3-isopropylmalate = (2S)-2-isopropylmalate. It participates in amino-acid biosynthesis; L-leucine biosynthesis; L-leucine from 3-methyl-2-oxobutanoate: step 2/4. In terms of biological role, catalyzes the isomerization between 2-isopropylmalate and 3-isopropylmalate, via the formation of 2-isopropylmaleate. The polypeptide is 3-isopropylmalate dehydratase large subunit (Photorhabdus laumondii subsp. laumondii (strain DSM 15139 / CIP 105565 / TT01) (Photorhabdus luminescens subsp. laumondii)).